We begin with the raw amino-acid sequence, 293 residues long: Formamidopyrimidine-DNA glycosylase (293 aa).

Residue P2 is the Schiff-base intermediate with DNA of the active site. Residue E3 is the Proton donor of the active site. The active-site Proton donor; for beta-elimination activity is K58. Residues H104, R123, and K166 each coordinate DNA. The FPG-type zinc finger occupies 257 to 293 (QVYDREGEPCRTDGCEGVVKRFVQNGRSTFWCPKCQR). R283 serves as the catalytic Proton donor; for delta-elimination activity.

It belongs to the FPG family. As to quaternary structure, monomer. Requires Zn(2+) as cofactor.

It carries out the reaction Hydrolysis of DNA containing ring-opened 7-methylguanine residues, releasing 2,6-diamino-4-hydroxy-5-(N-methyl)formamidopyrimidine.. It catalyses the reaction 2'-deoxyribonucleotide-(2'-deoxyribose 5'-phosphate)-2'-deoxyribonucleotide-DNA = a 3'-end 2'-deoxyribonucleotide-(2,3-dehydro-2,3-deoxyribose 5'-phosphate)-DNA + a 5'-end 5'-phospho-2'-deoxyribonucleoside-DNA + H(+). In terms of biological role, involved in base excision repair of DNA damaged by oxidation or by mutagenic agents. Acts as a DNA glycosylase that recognizes and removes damaged bases. Has a preference for oxidized purines, such as 7,8-dihydro-8-oxoguanine (8-oxoG). Has AP (apurinic/apyrimidinic) lyase activity and introduces nicks in the DNA strand. Cleaves the DNA backbone by beta-delta elimination to generate a single-strand break at the site of the removed base with both 3'- and 5'-phosphates. This is Formamidopyrimidine-DNA glycosylase from Bradyrhizobium sp. (strain ORS 278).